The following is a 212-amino-acid chain: uncharacterized protein (212 aa).

The first 18 residues, 1-18 (MQLTQVLAVAILAAGVSA), serve as a signal peptide directing secretion. The interval 108-180 (VSHNRVNAKQ…KDYGHKDYGH (73 aa)) is disordered. A compositionally biased stretch (basic and acidic residues) spans 117 to 180 (QRRDDKKDYG…KDYGHKDYGH (64 aa)). The tract at residues 120–210 (DDKKDYGKND…KDYGYKGYDD (91 aa)) is 15 X 5 AA tandem repeats of K-D-Y-G-H. Repeat unit 1 spans residues 123-127 (KDYGK). Residues 128–132 (NDYGK) form a 2; truncated repeat. 3 repeat units span residues 133 to 137 (KDYGK), 138 to 142 (KDYGK), and 143 to 147 (KDYGK). One copy of the 6; truncated repeat lies at 148–152 (KEYDP). 5 tandem repeats follow at residues 166–170 (KDYGH), 171–175 (KDYGH), 176–180 (KDYGH), 181–185 (KDYGH), and 186–190 (KDYGH). Residues 191-195 (DDYGY) form a 12; truncated repeat. One copy of the 13; truncated repeat lies at 196-200 (KGYDD). The 14; truncated repeat unit spans residues 201–205 (KDYGY). One copy of the 15; truncated repeat lies at 206–210 (KGYDD).

It localises to the secreted. This is an uncharacterized protein from Arthroderma benhamiae (strain ATCC MYA-4681 / CBS 112371) (Trichophyton mentagrophytes).